Reading from the N-terminus, the 187-residue chain is Ribosome-recycling factor (187 aa).

It belongs to the RRF family.

It localises to the cytoplasm. Its function is as follows. Responsible for the release of ribosomes from messenger RNA at the termination of protein biosynthesis. May increase the efficiency of translation by recycling ribosomes from one round of translation to another. The protein is Ribosome-recycling factor of Xanthobacter autotrophicus (strain ATCC BAA-1158 / Py2).